An 81-amino-acid chain; its full sequence is Penaeidin-3c (81 aa).

Residues 1–19 form the signal peptide; that stretch reads MRLVVCLVFLASFALVCQG. Gln20 carries the pyrrolidone carboxylic acid modification. 3 disulfides stabilise this stretch: Cys50/Cys65, Cys54/Cys72, and Cys66/Cys73. Ser80 is modified (serine amide).

Belongs to the penaeidin family. As to expression, higher expression in hemocytes and to a lesser extent in heart, testis, gills, intestine, lymphoid organ and hepatopancreas. Traces in eyes and subcuticular epithelium. Not present in the brain.

It is found in the cytoplasmic granule. Antibacterial activity against M.luteus and E.coli bacteria. Antifungal activity against N.crassa and F.oxysporum. Presents chitin-binding activity. The chain is Penaeidin-3c from Penaeus vannamei (Whiteleg shrimp).